The chain runs to 59 residues: Single-pass membrane and coiled-coil domain-containing protein 4 (59 aa).

The tract at residues 1–23 is disordered; that stretch reads MRQLKGKPKKETSKDKKERKQAM. Basic and acidic residues predominate over residues 9–22; sequence KKETSKDKKERKQA. A coiled-coil region spans residues 9 to 31; that stretch reads KKETSKDKKERKQAMQEARQQIT. The helical transmembrane segment at 32 to 52 threads the bilayer; that stretch reads TVVLPTLAVVVALIVVFVYVA.

This sequence belongs to the SMCO4 family.

Its subcellular location is the membrane. The protein is Single-pass membrane and coiled-coil domain-containing protein 4 (smco4) of Xenopus laevis (African clawed frog).